Consider the following 134-residue polypeptide: Small ribosomal subunit protein uS8c (134 aa).

This sequence belongs to the universal ribosomal protein uS8 family. Part of the 30S ribosomal subunit.

It is found in the plastid. The protein localises to the chloroplast. In terms of biological role, one of the primary rRNA binding proteins, it binds directly to 16S rRNA central domain where it helps coordinate assembly of the platform of the 30S subunit. The polypeptide is Small ribosomal subunit protein uS8c (rps8) (Daucus carota (Wild carrot)).